Reading from the N-terminus, the 267-residue chain is Tryptophan synthase alpha chain (267 aa).

Active-site proton acceptor residues include Glu49 and Asp60.

This sequence belongs to the TrpA family. Tetramer of two alpha and two beta chains.

The catalysed reaction is (1S,2R)-1-C-(indol-3-yl)glycerol 3-phosphate + L-serine = D-glyceraldehyde 3-phosphate + L-tryptophan + H2O. Its pathway is amino-acid biosynthesis; L-tryptophan biosynthesis; L-tryptophan from chorismate: step 5/5. In terms of biological role, the alpha subunit is responsible for the aldol cleavage of indoleglycerol phosphate to indole and glyceraldehyde 3-phosphate. The sequence is that of Tryptophan synthase alpha chain from Solibacter usitatus (strain Ellin6076).